The following is a 375-amino-acid chain: Queuine tRNA-ribosyltransferase (375 aa).

The Proton acceptor role is filled by Asp90. Residues 90–94 (DSGGF), Asp144, Gln193, and Gly220 contribute to the substrate site. The tract at residues 251–257 (GVGTPED) is RNA binding. Asp270 serves as the catalytic Nucleophile. The interval 275 to 279 (TRNAR) is RNA binding; important for wobble base 34 recognition. Zn(2+) is bound by residues Cys308, Cys310, Cys313, and His339.

This sequence belongs to the queuine tRNA-ribosyltransferase family. In terms of assembly, homodimer. Within each dimer, one monomer is responsible for RNA recognition and catalysis, while the other monomer binds to the replacement base PreQ1. Requires Zn(2+) as cofactor.

The enzyme catalyses 7-aminomethyl-7-carbaguanine + guanosine(34) in tRNA = 7-aminomethyl-7-carbaguanosine(34) in tRNA + guanine. It participates in tRNA modification; tRNA-queuosine biosynthesis. Functionally, catalyzes the base-exchange of a guanine (G) residue with the queuine precursor 7-aminomethyl-7-deazaguanine (PreQ1) at position 34 (anticodon wobble position) in tRNAs with GU(N) anticodons (tRNA-Asp, -Asn, -His and -Tyr). Catalysis occurs through a double-displacement mechanism. The nucleophile active site attacks the C1' of nucleotide 34 to detach the guanine base from the RNA, forming a covalent enzyme-RNA intermediate. The proton acceptor active site deprotonates the incoming PreQ1, allowing a nucleophilic attack on the C1' of the ribose to form the product. After dissociation, two additional enzymatic reactions on the tRNA convert PreQ1 to queuine (Q), resulting in the hypermodified nucleoside queuosine (7-(((4,5-cis-dihydroxy-2-cyclopenten-1-yl)amino)methyl)-7-deazaguanosine). This is Queuine tRNA-ribosyltransferase from Janthinobacterium sp. (strain Marseille) (Minibacterium massiliensis).